The primary structure comprises 130 residues: Ribosome-binding factor A (130 aa).

Residues 111–130 (RDLDDVGPEATSSDEDAEQR) are disordered.

The protein belongs to the RbfA family. Monomer. Binds 30S ribosomal subunits, but not 50S ribosomal subunits or 70S ribosomes.

The protein localises to the cytoplasm. In terms of biological role, one of several proteins that assist in the late maturation steps of the functional core of the 30S ribosomal subunit. Associates with free 30S ribosomal subunits (but not with 30S subunits that are part of 70S ribosomes or polysomes). Required for efficient processing of 16S rRNA. May interact with the 5'-terminal helix region of 16S rRNA. This Xanthomonas axonopodis pv. citri (strain 306) protein is Ribosome-binding factor A.